A 158-amino-acid polypeptide reads, in one-letter code: NAD(P)H-quinone oxidoreductase subunit J, chloroplastic (158 aa).

This sequence belongs to the complex I 30 kDa subunit family. In terms of assembly, NDH is composed of at least 16 different subunits, 5 of which are encoded in the nucleus.

It localises to the plastid. The protein resides in the chloroplast thylakoid membrane. It catalyses the reaction a plastoquinone + NADH + (n+1) H(+)(in) = a plastoquinol + NAD(+) + n H(+)(out). The enzyme catalyses a plastoquinone + NADPH + (n+1) H(+)(in) = a plastoquinol + NADP(+) + n H(+)(out). In terms of biological role, NDH shuttles electrons from NAD(P)H:plastoquinone, via FMN and iron-sulfur (Fe-S) centers, to quinones in the photosynthetic chain and possibly in a chloroplast respiratory chain. The immediate electron acceptor for the enzyme in this species is believed to be plastoquinone. Couples the redox reaction to proton translocation, and thus conserves the redox energy in a proton gradient. This Cryptomeria japonica (Japanese cedar) protein is NAD(P)H-quinone oxidoreductase subunit J, chloroplastic.